A 443-amino-acid chain; its full sequence is MPFIVNTDQDREEMLRSIGASSFDDLIADIPPEIRLDRALELFPALSEQEVMTLLEGLSSANSSSAGFVSFLGGGAYDHFIPSAVKSIVSRSEFYTAYTPYQAEVSQGTLQAIYEYQSMMCRLYDMDVANASMYDGATALAEAVLMAMTITGRELVVLAGKLSPYTGSVLKTYLEASGHGVIHQNRLENGIGSVDGLKGLMNDRVAAVVVQQPNFYGSLEEVEAIGAAARENGALFIVSADPVSLGILAAPGSYGADIAVGEGQPLGNHQNFGGPYLGIFTVRQPYVRKIPGRLVGMTKDREGNDGFILTLQTREQHIRREKATSNICTNQALCALQAAVYLSLLGKQGIREVAEQCTLKAHYLAGRITELPGYSLKYSAPFFREFVLETPLPAAVIISAMLEKGIFAGYDLSASGENGLLVAVTEKRTRAELDSFVQALAAL.

This sequence belongs to the GcvP family. N-terminal subunit subfamily. As to quaternary structure, the glycine cleavage system is composed of four proteins: P, T, L and H. In this organism, the P 'protein' is a heterodimer of two subunits.

The enzyme catalyses N(6)-[(R)-lipoyl]-L-lysyl-[glycine-cleavage complex H protein] + glycine + H(+) = N(6)-[(R)-S(8)-aminomethyldihydrolipoyl]-L-lysyl-[glycine-cleavage complex H protein] + CO2. The glycine cleavage system catalyzes the degradation of glycine. The P protein binds the alpha-amino group of glycine through its pyridoxal phosphate cofactor; CO(2) is released and the remaining methylamine moiety is then transferred to the lipoamide cofactor of the H protein. The sequence is that of Probable glycine dehydrogenase (decarboxylating) subunit 1 from Chlorobium limicola (strain DSM 245 / NBRC 103803 / 6330).